The primary structure comprises 202 residues: Pyrrolidone-carboxylate peptidase (202 aa).

Catalysis depends on residues glutamate 78, cysteine 141, and histidine 165.

Belongs to the peptidase C15 family. As to quaternary structure, homotetramer.

The protein resides in the cytoplasm. It catalyses the reaction Release of an N-terminal pyroglutamyl group from a polypeptide, the second amino acid generally not being Pro.. In terms of biological role, removes 5-oxoproline from various penultimate amino acid residues except L-proline. The chain is Pyrrolidone-carboxylate peptidase from Thermosipho melanesiensis (strain DSM 12029 / CIP 104789 / BI429).